Consider the following 81-residue polypeptide: Translational regulator CsrA (81 aa).

It belongs to the CsrA/RsmA family. As to quaternary structure, homodimer; the beta-strands of each monomer intercalate to form a hydrophobic core, while the alpha-helices form wings that extend away from the core.

It localises to the cytoplasm. In terms of biological role, a translational regulator that binds mRNA to regulate translation initiation and/or mRNA stability. Usually binds in the 5'-UTR at or near the Shine-Dalgarno sequence preventing ribosome-binding, thus repressing translation. Its main target seems to be the major flagellin gene, while its function is anatagonized by FliW. The polypeptide is Translational regulator CsrA (Halothermothrix orenii (strain H 168 / OCM 544 / DSM 9562)).